A 398-amino-acid polypeptide reads, in one-letter code: 1-deoxy-D-xylulose 5-phosphate reductoisomerase (398 aa).

The NADPH site is built by Thr-14, Gly-15, Ser-16, Ile-17, Gln-42, and Asn-128. Residue Lys-129 coordinates 1-deoxy-D-xylulose 5-phosphate. Glu-130 lines the NADPH pocket. Asp-154 is a Mn(2+) binding site. 1-deoxy-D-xylulose 5-phosphate contacts are provided by Ser-155, Glu-156, Ser-185, and His-208. Glu-156 is a binding site for Mn(2+). Residue Gly-214 coordinates NADPH. Ser-221, Asn-226, Lys-227, and Glu-230 together coordinate 1-deoxy-D-xylulose 5-phosphate. Glu-230 is a Mn(2+) binding site.

The protein belongs to the DXR family. Requires Mg(2+) as cofactor. Mn(2+) is required as a cofactor.

The catalysed reaction is 2-C-methyl-D-erythritol 4-phosphate + NADP(+) = 1-deoxy-D-xylulose 5-phosphate + NADPH + H(+). It participates in isoprenoid biosynthesis; isopentenyl diphosphate biosynthesis via DXP pathway; isopentenyl diphosphate from 1-deoxy-D-xylulose 5-phosphate: step 1/6. Its function is as follows. Catalyzes the NADPH-dependent rearrangement and reduction of 1-deoxy-D-xylulose-5-phosphate (DXP) to 2-C-methyl-D-erythritol 4-phosphate (MEP). The protein is 1-deoxy-D-xylulose 5-phosphate reductoisomerase of Dechloromonas aromatica (strain RCB).